Reading from the N-terminus, the 430-residue chain is Histidine--tRNA ligase (430 aa).

The protein belongs to the class-II aminoacyl-tRNA synthetase family. As to quaternary structure, homodimer.

Its subcellular location is the cytoplasm. It carries out the reaction tRNA(His) + L-histidine + ATP = L-histidyl-tRNA(His) + AMP + diphosphate + H(+). The sequence is that of Histidine--tRNA ligase (hisS) from Chlamydia pneumoniae (Chlamydophila pneumoniae).